The primary structure comprises 117 residues: Large ribosomal subunit protein bL19 (117 aa).

This sequence belongs to the bacterial ribosomal protein bL19 family.

Its function is as follows. This protein is located at the 30S-50S ribosomal subunit interface and may play a role in the structure and function of the aminoacyl-tRNA binding site. The chain is Large ribosomal subunit protein bL19 from Methylibium petroleiphilum (strain ATCC BAA-1232 / LMG 22953 / PM1).